We begin with the raw amino-acid sequence, 440 residues long: Microtubule-associated tumor suppressor 1 homolog A (440 aa).

The disordered stretch occupies residues 44 to 67; the sequence is KSRTNSKNPQPPTNGQPDLVPPES. A coiled-coil region spans residues 69–401; the sequence is SRNVEYYKAQ…RLSMENEELL (333 aa). The segment at 407-440 is disordered; sequence GDLNSPRKISPSPSLNLQSPRTSGMFSSPPVSPR. Residues 417–432 are compositionally biased toward polar residues; sequence PSPSLNLQSPRTSGMF.

The protein belongs to the MTUS1 family. In terms of assembly, homodimer.

The protein localises to the mitochondrion. Its subcellular location is the golgi apparatus. The protein resides in the cell membrane. It localises to the nucleus. Its function is as follows. May inhibit cell proliferation. The sequence is that of Microtubule-associated tumor suppressor 1 homolog A (mtus1a) from Danio rerio (Zebrafish).